Reading from the N-terminus, the 609-residue chain is Hemagglutinin/proteinase (609 aa).

The first 24 residues, 1–24 (MKMIQRPLNWLVLAGAATGFPLYA), serve as a signal peptide directing secretion. Residues 25–196 (AQMVTIDDAS…LDQWDGINHA (172 aa)) constitute a propeptide that is removed on maturation. Position 343 (histidine 343) interacts with Zn(2+). Glutamate 344 is a catalytic residue. Zn(2+) contacts are provided by histidine 347 and glutamate 367. The active-site Proton donor is the histidine 426.

The protein belongs to the peptidase M4 family. Zn(2+) is required as a cofactor.

Its subcellular location is the secreted. Functionally, may play a role in the pathogenesis of cholera. Hap nicks and activates the A subunit of cholera enterotoxin and related enterotoxins. The protein is Hemagglutinin/proteinase (hap) of Vibrio cholerae serotype O1 (strain ATCC 39315 / El Tor Inaba N16961).